Consider the following 76-residue polypeptide: Dolichyl-diphosphooligosaccharide--protein glycosyltransferase subunit OST5 (76 aa).

Helical transmembrane passes span 14–34 (FYPV…ATFI) and 54–74 (ALIA…AGGI).

It belongs to the OST5 family. As to quaternary structure, component of the oligosaccharyltransferase (OST) complex.

The protein resides in the membrane. Functionally, subunit of the oligosaccharyl transferase (OST) complex that catalyzes the initial transfer of a defined glycan (Glc(3)Man(9)GlcNAc(2) in eukaryotes) from the lipid carrier dolichol-pyrophosphate to an asparagine residue within an Asn-X-Ser/Thr consensus motif in nascent polypeptide chains, the first step in protein N-glycosylation. N-glycosylation occurs cotranslationally and the complex associates with the Sec61 complex at the channel-forming translocon complex that mediates protein translocation across the endoplasmic reticulum (ER). All subunits are required for a maximal enzyme activity. The protein is Dolichyl-diphosphooligosaccharide--protein glycosyltransferase subunit OST5 of Dictyostelium discoideum (Social amoeba).